We begin with the raw amino-acid sequence, 378 residues long: MKILVDENMPYARELFSRLGEVKAVPGRPIPVAELDDADALMVRSVTKVNEALLGGKSIKFVGTATAGTDHVDEAWLKQAGVGFSAAPGCNAIAVVEYVFSALLMLAERDGFALSDRTVGIVGVGNVGARLQARLEALGIRTLLCDPPRADRGDEGDFRSLDELVQEADILTFHTPLYKEGPYKTLHLADEALIGRLKPGTILINACRGPVVDNTALLARLNAGQSLSVVLDVWEGEPDLNVALLEKIDIGTSHIAGYTLEGKARGTTQVFEAYSTFIGRAQKVALDTLLPAPEFGRITLHGPLDQPTLKRLAHLVYDVRRDDAPLRKVAGIPGEFDKLRKNYLERREWSSLYVMCDDASAATLLHKLGFNAVHHPAH.

Substrate is bound by residues Ser-45 and Thr-66. NAD(+) is bound by residues Asp-146 and Thr-175. Residue Arg-208 is part of the active site. Asp-232 lines the NAD(+) pocket. Glu-237 is a catalytic residue. The active-site Proton donor is His-254. Gly-257 contacts NAD(+). Position 258 (Tyr-258) interacts with substrate.

This sequence belongs to the D-isomer specific 2-hydroxyacid dehydrogenase family. PdxB subfamily. Homodimer.

It is found in the cytoplasm. It carries out the reaction 4-phospho-D-erythronate + NAD(+) = (R)-3-hydroxy-2-oxo-4-phosphooxybutanoate + NADH + H(+). Its pathway is cofactor biosynthesis; pyridoxine 5'-phosphate biosynthesis; pyridoxine 5'-phosphate from D-erythrose 4-phosphate: step 2/5. Functionally, catalyzes the oxidation of erythronate-4-phosphate to 3-hydroxy-2-oxo-4-phosphonooxybutanoate. The protein is Erythronate-4-phosphate dehydrogenase of Citrobacter koseri (strain ATCC BAA-895 / CDC 4225-83 / SGSC4696).